Consider the following 156-residue polypeptide: MSRRHRAEKREINPDPKFGDLVVTKFMNAIMLHGKKSVAESIVYGAFDAVQSKLKQEPVAVFHSALDNIAPHVEVRSRRVGGATYQVPVDVRPERRQALAIRWLIAAARKRNETTMVDRLCGELMDAANNRGSAVKKREDTHKMADANRAFSHYRW.

Belongs to the universal ribosomal protein uS7 family. Part of the 30S ribosomal subunit. Contacts proteins S9 and S11.

One of the primary rRNA binding proteins, it binds directly to 16S rRNA where it nucleates assembly of the head domain of the 30S subunit. Is located at the subunit interface close to the decoding center, probably blocks exit of the E-site tRNA. The polypeptide is Small ribosomal subunit protein uS7 (Rhizobium meliloti (strain 1021) (Ensifer meliloti)).